We begin with the raw amino-acid sequence, 511 residues long: MAIPKAHYSLAVLVLLFVVVSSSQKVCNPECKAKEPFHCDNTHAFNRSGFPKNFTFGAATSAYQIEGAAHRALNGWDYFTHRYPEKVPDRSSADLACDSYDLYKDDVKLLKRMNVQAYRLSIAWSRVLPKGRLTGGVDENGITYYNNLINELKANGIEPYVTIFHWDVPQTLEDEYGGFLSTRIVEDYTNYAELLFQRFGDRVKFWITLNQPLSLALKGYGNGSYPPGRCTGCELGGDSGVEPYTVAHNQLLAHAKTVSLYRKRYQKFQGGKIGTTLIGRWFVPLNEFSELDKAAAKRAFDFFVGWFLDPLVYGKYPTIMREMVGDRLPEFTPEESALVKGSLDFLGLNYYVSQYATDAPPPTQPNAITDARVTLGFYRNGSPIGVVASSFVYYPPGFRQILNYIKDNYKNPLTYITENGVADLDLGNVTLATALADNGRIQNHCSHLSCLKCAMKDGCNVAGYFAWSLMDNYEFGNGYTLRFGMNWVNFTNPADRKEKASGKWFSKFLAK.

The signal sequence occupies residues 1–23 (MAIPKAHYSLAVLVLLFVVVSSS). 3 disulfides stabilise this stretch: cysteine 31–cysteine 450, cysteine 39–cysteine 445, and cysteine 230–cysteine 233. N-linked (GlcNAc...) asparagine glycosylation is found at asparagine 46 and asparagine 53. Residues glutamine 64, histidine 165, and 210 to 211 (NQ) contribute to the a beta-D-glucoside site. Asparagine 222 carries N-linked (GlcNAc...) asparagine glycosylation. A beta-D-glucoside-binding residues include tyrosine 351 and glutamate 418. The active-site Nucleophile is glutamate 418. Asparagine 428 carries N-linked (GlcNAc...) asparagine glycosylation. Residues tryptophan 467, 474 to 475 (EF), and phenylalanine 483 each bind a beta-D-glucoside. An N-linked (GlcNAc...) asparagine glycan is attached at asparagine 489.

Belongs to the glycosyl hydrolase 1 family. In terms of tissue distribution, specifically expressed in roots.

The enzyme catalyses a thioglucoside + H2O = a sugar + a thiol.. It carries out the reaction Hydrolysis of terminal, non-reducing beta-D-glucosyl residues with release of beta-D-glucose.. Its function is as follows. Hydrolyzes sinigrin and, with lower efficiency, p-nitrophenyl beta-D-glucoside. The polypeptide is Myrosinase 5 (Arabidopsis thaliana (Mouse-ear cress)).